The following is a 477-amino-acid chain: EDLSLVGQPENDYDTGDDBTAADPDSNNTAAALDVRRPLPSGTRVRRPPLRHRRLAPGAVMSRDPPASPRPQEAQKAIRDEGGCMLPESDLGVLCPTGCELREELLKQRDPVRYKISMLKQNLTYFINSFDRMASDSNTLKQNVQTLRRRLNSRSSTHVNAQKEIENRYKEVKIRIESTVAGSLRSMKSVLEHLRAKMQRMEEAIKTQKELCSAPCTVNCRVPVVSGMHCEDIYRNGGRTSEAYYIQPDLFSEPYKVFCDMESHGGGWTVVQNRVDGSSNFARDWNTYKAEFGNIAFGNGKSICNIPGEYWLGTKTVHQLTKQHTQQVLFDMSDWEGSSVYAQYASFRPENEAQGYRLWVEDYSGNAGNALLEGATQLMGDNRTMTIHNGMQFSTFDRDNDNWNPGDPTKHCSREDAGGWWYNRCHAANPNGRYYWGGIYTKEQADYGTDDGVVWMNWKGSWYSMRQMAMKLRPKWP.

Positions 1 to 76 (EDLSLVGQPE…ASPRPQEAQK (76 aa)) are disordered. Position 13 is a sulfotyrosine (Tyr13). N-linked (GlcNAc...) asparagine glycosylation is present at Asn27. Positions 44–55 (RVRRPPLRHRRL) are enriched in basic residues. Intrachain disulfides connect Cys220–Cys304, Cys230–Cys259, and Cys412–Cys425. In terms of domain architecture, Fibrinogen C-terminal spans 221-476 (RVPVVSGMHC…QMAMKLRPKW (256 aa)).

In terms of assembly, heterohexamer; disulfide linked. Contains 2 sets of 3 non-identical chains (alpha, beta and gamma). The 2 heterotrimers are in head to head conformation with the N-termini in a small central domain. Conversion of fibrinogen to fibrin is triggered by thrombin, which cleaves fibrinopeptides A and B from alpha and beta chains, and thus exposes the N-terminal polymerization sites responsible for the formation of the soft clot. The soft clot is converted into the hard clot by factor XIIIA which catalyzes the epsilon-(gamma-glutamyl)lysine cross-linking between gamma chains (stronger) and between alpha chains (weaker) of different monomers.

It localises to the secreted. In terms of biological role, fibrinogen has a double function: yielding monomers that polymerize into fibrin and acting as a cofactor in platelet aggregation. This Petromyzon marinus (Sea lamprey) protein is Fibrinogen beta chain.